A 989-amino-acid chain; its full sequence is Protease PrtH (989 aa).

2 consecutive repeats follow at residues threonine 270–asparagine 323 and serine 528–aspartate 581. The disordered stretch occupies residues proline 969–arginine 989.

It belongs to the peptidase C25 family.

It localises to the cytoplasmic vesicle. Its function is as follows. Cleaves human complement component C3. May enable P.gingivalis to evade complement-mediated killing during the immune response. Plays an important role in soft tissue infections and is a virulence factor. The chain is Protease PrtH (prtH) from Porphyromonas gingivalis (strain ATCC BAA-308 / W83).